Consider the following 194-residue polypeptide: 5'-deoxynucleotidase VS_2195 (194 aa).

Substrate is bound by residues 18-19 (RW) and His33. The 113-residue stretch at 30-142 (ISEHSLQVAF…VKQADTICAY (113 aa)) folds into the HD domain. The a divalent metal cation site is built by His33, His68, and Asp69. Residues Asp69, 77–80 (DLPT), and Asp137 contribute to the substrate site. Asp137 contributes to the a divalent metal cation binding site.

It belongs to the 5DNU family. As to quaternary structure, homodimer. The cofactor is a divalent metal cation.

Its subcellular location is the cytoplasm. It catalyses the reaction a 2'-deoxyribonucleoside 5'-phosphate + H2O = a 2'-deoxyribonucleoside + phosphate. In terms of biological role, catalyzes the strictly specific dephosphorylation of 2'-deoxyribonucleoside 5'-monophosphates. This is 5'-deoxynucleotidase VS_2195 from Vibrio atlanticus (strain LGP32) (Vibrio splendidus (strain Mel32)).